We begin with the raw amino-acid sequence, 231 residues long: Biosynthetic peptidoglycan transglycosylase (231 aa).

The chain crosses the membrane as a helical span at residues 12-32 (LLAAFALLLLWQVWLFAQVAW).

The protein belongs to the glycosyltransferase 51 family.

It is found in the cell inner membrane. It catalyses the reaction [GlcNAc-(1-&gt;4)-Mur2Ac(oyl-L-Ala-gamma-D-Glu-L-Lys-D-Ala-D-Ala)](n)-di-trans,octa-cis-undecaprenyl diphosphate + beta-D-GlcNAc-(1-&gt;4)-Mur2Ac(oyl-L-Ala-gamma-D-Glu-L-Lys-D-Ala-D-Ala)-di-trans,octa-cis-undecaprenyl diphosphate = [GlcNAc-(1-&gt;4)-Mur2Ac(oyl-L-Ala-gamma-D-Glu-L-Lys-D-Ala-D-Ala)](n+1)-di-trans,octa-cis-undecaprenyl diphosphate + di-trans,octa-cis-undecaprenyl diphosphate + H(+). It participates in cell wall biogenesis; peptidoglycan biosynthesis. In terms of biological role, peptidoglycan polymerase that catalyzes glycan chain elongation from lipid-linked precursors. This is Biosynthetic peptidoglycan transglycosylase from Azoarcus sp. (strain BH72).